Here is a 59-residue protein sequence, read N- to C-terminus: Large ribosomal subunit protein uL30 (59 aa).

The protein belongs to the universal ribosomal protein uL30 family. Part of the 50S ribosomal subunit.

The protein is Large ribosomal subunit protein uL30 of Sodalis glossinidius (strain morsitans).